The following is a 442-amino-acid chain: Meiotically up-regulated gene 191 protein (442 aa).

Thr-361 is modified (phosphothreonine). Polar residues predominate over residues 416 to 429 (RNNPSSGESTTLPQ). Residues 416-442 (RNNPSSGESTTLPQPSHGKKDKDCVIS) form a disordered region. Over residues 433 to 442 (GKKDKDCVIS) the composition is skewed to basic and acidic residues.

It localises to the cytoplasm. Its subcellular location is the nucleus. In terms of biological role, has a role in meiosis. In Schizosaccharomyces pombe (strain 972 / ATCC 24843) (Fission yeast), this protein is Meiotically up-regulated gene 191 protein (mug191).